We begin with the raw amino-acid sequence, 184 residues long: Inner membrane-spanning protein YciB (184 aa).

5 helical membrane-spanning segments follow: residues 19-39 (LVGI…QLLI), 52-72 (LFMG…NQLE), 76-96 (WKVT…QYGF), 123-143 (LGWA…SQYL), and 151-171 (FKTF…GIYI).

The protein belongs to the YciB family.

The protein resides in the cell inner membrane. Plays a role in cell envelope biogenesis, maintenance of cell envelope integrity and membrane homeostasis. The polypeptide is Inner membrane-spanning protein YciB (Pasteurella multocida (strain Pm70)).